The primary structure comprises 173 residues: Endoribonuclease YbeY (173 aa).

Zn(2+) is bound by residues His-120, His-124, and His-130.

This sequence belongs to the endoribonuclease YbeY family. Zn(2+) serves as cofactor.

The protein resides in the cytoplasm. Functionally, single strand-specific metallo-endoribonuclease involved in late-stage 70S ribosome quality control and in maturation of the 3' terminus of the 16S rRNA. This Kineococcus radiotolerans (strain ATCC BAA-149 / DSM 14245 / SRS30216) protein is Endoribonuclease YbeY.